A 154-amino-acid chain; its full sequence is Superoxide dismutase [Cu-Zn] (154 aa).

Residues histidine 47, histidine 49, and histidine 64 each contribute to the Cu cation site. The cysteines at positions 58 and 147 are disulfide-linked. Residues histidine 64, histidine 72, histidine 81, and aspartate 84 each contribute to the Zn(2+) site. Residue histidine 121 participates in Cu cation binding. The segment at 122 to 143 (GGTDDLGKGGNEESLKTGNAGP) is disordered. The span at 123-136 (GTDDLGKGGNEESL) shows a compositional bias: basic and acidic residues. Arginine 144 lines the substrate pocket.

This sequence belongs to the Cu-Zn superoxide dismutase family. Homodimer. Cu cation serves as cofactor. The cofactor is Zn(2+).

The protein resides in the cytoplasm. It carries out the reaction 2 superoxide + 2 H(+) = H2O2 + O2. Functionally, destroys radicals which are normally produced within the cells and which are toxic to biological systems. This chain is Superoxide dismutase [Cu-Zn] (SOD1), found in Cordyceps militaris (Caterpillar fungus).